Reading from the N-terminus, the 517-residue chain is MAKTNLNDFDKIIVLDFGSQYNQLITRRIRDFGIYSELLPHDLSIEKIKEMAPKGIIFSGGPNSVYDKGALKVDPEIFKLGIPILGICYGMQLMSYDLGGKVEKADNSEYGRADIEVIDPNAVLFEGLPREQYVWMSHGDLVTKAPEGFTITAKSKNCPISAIANDEKKFYGIQFHAEVRNSEYGLDILKNFAFKVCGAKANWTMDDFIEMQVDEIRKKVGDKKVILGLSGGVDSSVTATLLHKAIGDQLTAIFVDHGMLRKDEGDQVMQALNKDLGVNIIRVNAQERFLNKLKGVTDPEQKRKIIGKEFIEVFNEEAKKLKDVDFLAQGTLYTDVIESGTNTAQTIKSHHNVGGLPEDMHFELIEPLRKLFKDEVRELGEKLGIPHDLVWRQPFPGPGLGIRVIGEVTEDKLKIVRESDAILREEIKNAGLQEDIWQYFTVLPGIRSVGVMGDGRTYDYTIGIRAVTSIDGMTADFAQIPWDVLSKISTRIVDECDHINRVVYDITSKPPSTIEWE.

Residues 11 to 202 form the Glutamine amidotransferase type-1 domain; it reads KIIVLDFGSQ…AFKVCGAKAN (192 aa). C88 functions as the Nucleophile in the catalytic mechanism. Active-site residues include H176 and E178. Positions 203–392 constitute a GMPS ATP-PPase domain; the sequence is WTMDDFIEMQ…LGIPHDLVWR (190 aa). 230–236 contacts ATP; it reads SGGVDSS.

As to quaternary structure, homodimer.

It catalyses the reaction XMP + L-glutamine + ATP + H2O = GMP + L-glutamate + AMP + diphosphate + 2 H(+). The protein operates within purine metabolism; GMP biosynthesis; GMP from XMP (L-Gln route): step 1/1. Functionally, catalyzes the synthesis of GMP from XMP. In Lactobacillus johnsonii (strain CNCM I-12250 / La1 / NCC 533), this protein is GMP synthase [glutamine-hydrolyzing].